A 463-amino-acid chain; its full sequence is uncharacterized protein (463 aa).

One can recognise an HTH gntR-type domain in the interval 13–81 (IPLYQQLYRY…PRSGWFADYH (69 aa)). Positions 41 to 60 (KRLLANQLSISQTTVERAYE) form a DNA-binding region, H-T-H motif. N6-(pyridoxal phosphate)lysine is present on Lys308.

It in the C-terminal section; belongs to the class-I pyridoxal-phosphate-dependent aminotransferase family. The cofactor is pyridoxal 5'-phosphate.

This is an uncharacterized protein from Bacillus subtilis (strain 168).